We begin with the raw amino-acid sequence, 93 residues long: Large ribosomal subunit protein eL29 (93 aa).

A compositionally biased stretch (basic residues) spans 1-31; it reads MAKSKNHSTHHKNRKDHRNGIKKAVVHKKTS. Residues 1–33 form a disordered region; the sequence is MAKSKNHSTHHKNRKDHRNGIKKAVVHKKTSSK.

Belongs to the eukaryotic ribosomal protein eL29 family.

This chain is Large ribosomal subunit protein eL29 (rpl29), found in Dictyostelium discoideum (Social amoeba).